Reading from the N-terminus, the 1563-residue chain is NACHT domain- and WD repeat-containing protein 1 (1563 aa).

The WD 1 repeat unit spans residues 274–314 (TNHQVLEQLRELELARQELGWLYQEIRHHLWQSTESTKVFC). The NACHT domain occupies 336–666 (TPLVLFGPPG…HRQLSQVIQV (331 aa)). An ATP-binding site is contributed by 342-349 (GPPGIGKT). WD repeat units lie at residues 866–905 (GCHK…VVHV), 908–947 (GHTA…EKVT), 954–994 (QNPT…LVFC), 998–1037 (DVSD…LQEK), 1044–1082 (KEET…LLEK), 1126–1165 (EHED…TLLN), 1168–1207 (EGVG…KLQS), 1212–1251 (LDRT…EQDC), 1253–1292 (DTSN…DVLC), 1346–1385 (QLPE…FPLE), 1386–1425 (AHGS…GMFE), and 1431–1470 (SCCR…LLAV). The disordered stretch occupies residues 1534–1563 (AAEASQDAEPVAVEGKESKSNKRSQVCLIL).

In terms of assembly, may interact with HSP90AA1, HSP90AB1 and BAG2.

It localises to the cytoplasm. Its subcellular location is the cytosol. In terms of biological role, may play a role in the control of androgen receptor (AR) protein steady-state levels. The protein is NACHT domain- and WD repeat-containing protein 1 (Nwd1) of Mus musculus (Mouse).